The primary structure comprises 795 residues: Probable diacylglycerol kinase 3 (795 aa).

2 EF-hand domains span residues 170-205 and 215-250; these read TPEN…MMNV and ELEQ…NIPL. Ca(2+) contacts are provided by Asp-183, Asp-185, Asn-187, Glu-194, Asp-228, Asp-230, Asp-232, and Glu-239. 2 Phorbol-ester/DAG-type zinc fingers span residues 265–316 and 329–375; these read SHVW…ATNC and YHHW…AQEC. The DAGKc domain maps to 423–558; it reads NDCRPLLVLV…MDRWQIKIEI (136 aa).

The protein belongs to the eukaryotic diacylglycerol kinase family. In terms of assembly, monomer.

The enzyme catalyses a 1,2-diacyl-sn-glycerol + ATP = a 1,2-diacyl-sn-glycero-3-phosphate + ADP + H(+). Its function is as follows. Involved in AFD-neuron mediated thermotaxis. Regulates behavior to environmental temperature. Thought to have a role in olfactory adaptation by affecting diacylglycerol levels. The polypeptide is Probable diacylglycerol kinase 3 (dgk-3) (Caenorhabditis elegans).